A 2164-amino-acid polypeptide reads, in one-letter code: Hemagglutinin A (2164 aa).

The N-terminal stretch at 1-25 (MRKLNSLFSLAVLLSLLCWGQTAAA) is a signal peptide. 3 peptidase C25-like regions span residues 26 to 539 (QGGP…TPPP), 540 to 991 (GGSS…TPPP), and 992 to 1443 (GGTS…TPPP). Disordered regions lie at residues 493–512 (WDAPNGTPNPNPGTTTLSES) and 520–541 (SWKTIDADGDGNNWTTTPPPGG). Low complexity predominate over residues 496-508 (PNGTPNPNPGTTT).

It belongs to the peptidase C25 family.

In terms of biological role, agglutinates erythrocytes. The protein is Hemagglutinin A (hagA) of Porphyromonas gingivalis (strain ATCC BAA-308 / W83).